The following is an 835-amino-acid chain: Transcription intermediary factor 1-beta (835 aa).

Over residues 1-19 the composition is skewed to low complexity; that stretch reads MAASAAAASAAAASAASGS. Residues 1–49 are disordered; sequence MAASAAAASAAAASAASGSPGPGEGSAGGEKRSTAPSAAASASASAAAS. N-acetylalanine is present on alanine 2. Serine 19 and serine 26 each carry phosphoserine. Residue lysine 31 forms a Glycyl lysine isopeptide (Lys-Gly) (interchain with G-Cter in SUMO2) linkage. Residues 35-49 are compositionally biased toward low complexity; that stretch reads APSAAASASASAAAS. Phosphoserine is present on serine 50. The RING-type zinc-finger motif lies at 65-121; it reads CGVCRERLRPEREPRLLPCLHSACSACLGPAAPAAANSSGDGGAAGDGTVVDCPVCK. The tract at residues 65–376 is RBCC domain; it reads CGVCRERLRP…LIYFQLHRAL (312 aa). A Glycyl lysine isopeptide (Lys-Gly) (interchain with G-Cter in SUMO2) cross-link involves residue lysine 127. Residue serine 138 is modified to Phosphoserine. Residues 148–195 form a B box-type 1; atypical zinc finger; it reads DANQCCTSCEDNAPATSYCVECSEPLCETCVEAHQRVKYTKDHTVRST. Zn(2+) contacts are provided by cysteine 153, cysteine 156, cysteine 177, and histidine 181. A Glycyl lysine isopeptide (Lys-Gly) (interchain with G-Cter in SUMO2) cross-link involves residue lysine 199. The B box-type 2 zinc-finger motif lies at 204-245; sequence ERTVYCNVHKHEPLVLFCESCDTLTCRDCQLNAHKDHQYQFL. Zn(2+) contacts are provided by cysteine 209, histidine 212, cysteine 232, and histidine 237. The interval 246–376 is leucine zipper alpha helical coiled-coil region; sequence EDAVRNQRKL…LIYFQLHRAL (131 aa). An interaction with MAGEC2 region spans residues 247-376; it reads DAVRNQRKLL…LIYFQLHRAL (130 aa). Glycyl lysine isopeptide (Lys-Gly) (interchain with G-Cter in SUMO2) cross-links involve residues lysine 254 and lysine 261. Position 266 is an N6-acetyllysine (lysine 266). A Glycyl lysine isopeptide (Lys-Gly) (interchain with G-Cter in SUMO2) cross-link involves residue lysine 272. An N6-acetyllysine; alternate modification is found at lysine 304. Residue lysine 304 forms a Glycyl lysine isopeptide (Lys-Gly) (interchain with G-Cter in SUMO2); alternate linkage. Lysine 319 participates in a covalent cross-link: Glycyl lysine isopeptide (Lys-Gly) (interchain with G-Cter in SUMO2). Position 340 is an N6-acetyllysine (lysine 340). A Glycyl lysine isopeptide (Lys-Gly) (interchain with G-Cter in SUMO2) cross-link involves residue lysine 366. The tract at residues 366–370 is involved in binding PPP1CA; it reads KLIYF. N6-acetyllysine; alternate is present on lysine 377. A Glycyl lysine isopeptide (Lys-Gly) (interchain with G-Cter in SUMO2); alternate cross-link involves residue lysine 377. A Glycyl lysine isopeptide (Lys-Gly) (interchain with G-Cter in SUMO1); alternate cross-link involves residue lysine 377. Lysine 407 is covalently cross-linked (Glycyl lysine isopeptide (Lys-Gly) (interchain with G-Cter in SUMO2)). The interval 411 to 480 is disordered; it reads ERPGTNSTGP…SRSGEGEVSG (70 aa). Phosphoserine is present on serine 417. Lysine 434 is covalently cross-linked (Glycyl lysine isopeptide (Lys-Gly) (interchain with G-Cter in SUMO2)). Polar residues predominate over residues 434 to 443; sequence KQGSGSSQPM. Serine 437, serine 439, and serine 453 each carry phosphoserine. Lysine 469 participates in a covalent cross-link: Glycyl lysine isopeptide (Lys-Gly) (interchain with G-Cter in SUMO2); alternate. Residue lysine 469 forms a Glycyl lysine isopeptide (Lys-Gly) (interchain with G-Cter in SUMO1); alternate linkage. Position 470 is a citrulline (arginine 470). At serine 471 the chain carries Phosphoserine. Arginine 472 carries the citrulline modification. Phosphoserine occurs at positions 473, 479, and 489. Residues 476-513 form an HP1 box region; that stretch reads GEVSGLMRKVPRVSLERLDLDLTADSQPPVFKVFPGST. Positions 481-494 match the PxVxL motif motif; that stretch reads LMRKVPRVSLERLD. The residue at position 498 (threonine 498) is a Phosphothreonine. Phosphoserine is present on serine 501. Lysine 507 participates in a covalent cross-link: Glycyl lysine isopeptide (Lys-Gly) (interchain with G-Cter in SUMO2). Threonine 541 is modified (phosphothreonine). A Glycyl lysine isopeptide (Lys-Gly) (interchain with G-Cter in SUMO2); alternate cross-link involves residue lysine 554. Lysine 554 participates in a covalent cross-link: Glycyl lysine isopeptide (Lys-Gly) (interchain with G-Cter in SUMO); alternate. A Glycyl lysine isopeptide (Lys-Gly) (interchain with G-Cter in SUMO2) cross-link involves residue lysine 575. A disordered region spans residues 584–618; that stretch reads GPGAEGPRLASPSGSTSSGLEVVAPEGTSAPGGGP. Residue serine 594 is modified to Phosphoserine. The segment at 625–672 adopts a PHD-type zinc-finger fold; the sequence is ATICRVCQKPGDLVMCNQCEFCFHLDCHLPALQDVPGEEWSCSLCHVL. Residue lysine 676 forms a Glycyl lysine isopeptide (Lys-Gly) (interchain with G-Cter in SUMO) linkage. 3 positions are modified to phosphoserine: serine 683, serine 689, and serine 697. A Bromo domain is found at 695 to 799; the sequence is KLSPANQRKC…RFFETRMNEA (105 aa). Residue lysine 750 forms a Glycyl lysine isopeptide (Lys-Gly) (interchain with G-Cter in SUMO2); alternate linkage. Residue lysine 750 forms a Glycyl lysine isopeptide (Lys-Gly) (interchain with G-Cter in SUMO1); alternate linkage. Lysine 750 participates in a covalent cross-link: Glycyl lysine isopeptide (Lys-Gly) (interchain with G-Cter in SUMO); alternate. Serine 752 carries the phosphoserine modification. Tyrosine 755 is modified (phosphotyrosine). A Phosphoserine modification is found at serine 757. An N6-acetyllysine; alternate mark is found at lysine 770, lysine 774, and lysine 779. Glycyl lysine isopeptide (Lys-Gly) (interchain with G-Cter in SUMO2); alternate cross-links involve residues lysine 770, lysine 774, and lysine 779. A Glycyl lysine isopeptide (Lys-Gly) (interchain with G-Cter in SUMO1); alternate cross-link involves residue lysine 779. Serine 784 is modified (phosphoserine). Residue lysine 804 forms a Glycyl lysine isopeptide (Lys-Gly) (interchain with G-Cter in SUMO2); alternate linkage. Lysine 804 participates in a covalent cross-link: Glycyl lysine isopeptide (Lys-Gly) (interchain with G-Cter in SUMO); alternate. Positions 815 to 835 are disordered; that stretch reads MSLPGAGLSSQELSGGPGDGP. A Phosphoserine; by ATM and ATR and dsDNA kinase modification is found at serine 824.

The protein belongs to the TRIM/RBCC family. In terms of assembly, interacts with SETX. Oligomer; the RBCC domain homotrimerizes and interacts with one molecule of KRAB to form the KRAB-KAP1 corepressor complex. Binding to a KRAB domain is an absolute requirement for silencing gene expression. Interacts with CEBPB and NR3C1. Interacts with a number of KRAB-ZFP proteins including ZNF10, ZFP53, ZFP68, ZNF382 and ZNF256. Interacts with NCOR1, NR3C1 and CHD3. Interacts with CEBPB (via the RING-type and PHD-type zinc fingers). Component of a ternary complex that includes TRIM28, a HP1 protein (CBX1, CBX3 OR CBX5), a KRAB domain-containing protein, and DNA. Interacts with CBX5 (via the PxVxL motif); the interaction occurs in interphase nuclei and competes for binding POGZ. Interacts with POGZ; the interaction competes for interaction with CBX5. Interacts with SETDB1; the interaction is enhanced by KAP1 sumoylation, stimulates SETDB1 histone methyltransferase activity and gene silencing. Interacts (via the PHD-type zinc finger) with UBE2I; the interaction is required for sumoylation and repressor activity. Component of the TRIM28/KAP1-ERBB4-MDM2 complex involved in connecting growth factor and DNA damage responses. Interacts directly with ERBB4; the interaction represses ERBB4-mediated transcription activity. Interacts with MDM2; the interaction contributes to p53/TP53 inactivation. Component of the TRIM28/KAP1-MDM2-p53/TP53; involved in regulating p53/TP53 stabilization and activity. Interacts (via the leucine zipper alpha helical coiled-coil) with E2F1 (central region); the interaction inhibits E2F1 acetylation and transcriptional activity. Interacts with PPP1CA; the interaction dephosphorylates TRIM28 at Ser-824 and forms a complex at the p21 promoter site. Interacts with PPP1CB; the interaction is weak but is increased on dephosphorylation at Ser-824. Interacts with FES/FPS. Interacts with SMARCAD1. Interacts with, and sumoylates IRF7. Interacts with MAGEC2. Part of a complex composed of TRIM28, HDAC1, HDAC2 and EHMT2. Interacts with AICDA. Interacts (via the RBCC domain) with KOX1 (via the KRAB domain), ZNF268 (via the KRAB domain) and ZNF300 (via the KRAB domain); the interactions increase KOX1, ZNF268 and ZNF300 nuclear localization activities. The large PER complex involved in the histone methylation is composed of at least PER2, CBX3, TRIM28, SUV39H1 and/or SUV39H2; CBX3 mediates the formation of the complex. Interacts with isoform 2 of ZFP90. Forms a complex with FOXP3 in the presence of isoform 2 of ZFP90. Interacts with NR4A3; the interactions potentiates NR4A3 activity on NurRE promoter. Interacts (unphosphorylated or phosphorylated form) with ZBTB1 (via BTB domain). Probably part of a corepressor complex containing ZNF304, TRIM28, SETDB1 and DNMT1. Interacts with ATRX. Forms a complex with ATRX, SETDB1 and ZNF274. Interacts with ZFP568; the interaction mediates ZFP568 transcriptional repression activity. Interacts with RRP1B. Interacts with CRY1. Interacts with ZNF263; recruited to the SIX3 promoter along with other proteins involved in chromatin modification and transcriptional corepression where it contributes to transcriptional repression. Interacts with CYREN (via XLF motif). Interacts with TRIM17; this interaction prevents TRIM28 activity. Interacts with ZNF746. Interacts with PHF13. Interacts with ZNF354C. Interacts with ZNF432; the interaction is independent of PARP1. (Microbial infection) Interacts with herpes virus 8 protein LANA1; this interaction facilitates establishment of viral latency. ATM-induced phosphorylation on Ser-824 represses sumoylation leading to the de-repression of expression of a subset of genes involved in cell cycle control and apoptosis in response to genotoxic stress. Dephosphorylation by the phosphatases, PPP1CA and PP1CB forms, allows sumoylation and expression of TRIM28 target genes. Post-translationally, sumoylation/desumoylation events regulate TRIM28-mediated transcriptional repression. Sumoylation is required for interaction with CHD3 and SETDB1 and the corepressor activity. Represses and is repressed by Ser-824 phosphorylation. Enhances the TRIM28 corepressor activity, inhibiting transcriptional activity of a number of genes including GADD45A and CDKN1A/p21. Lys-554, Lys-779 and Lys-804 are the major sites of sumoylation. In response to Dox-induced DNA damage, enhanced phosphorylation on Ser-824 prevents sumoylation and allows de-repression of CDKN1A/p21. In terms of processing, auto-ubiquitinated; enhanced by MAGEA2 and MAGEC2. Citrullinated by PADI4. Post-translationally, ADP-ribosylated by SIRT6, promoting TRIM28/KAP1 interaction with CBX5, thereby contributing to the packaging of LINE-1 retrotransposon elements into transcriptionally repressive heterochromatin. Expressed in all tissues tested including spleen, thymus, prostate, testis, ovary, small intestine, colon and peripheral blood leukocytes.

The protein resides in the nucleus. It carries out the reaction S-ubiquitinyl-[E2 ubiquitin-conjugating enzyme]-L-cysteine + [acceptor protein]-L-lysine = [E2 ubiquitin-conjugating enzyme]-L-cysteine + N(6)-ubiquitinyl-[acceptor protein]-L-lysine.. Its pathway is protein modification; protein sumoylation. In terms of biological role, nuclear corepressor for KRAB domain-containing zinc finger proteins (KRAB-ZFPs). Mediates gene silencing by recruiting CHD3, a subunit of the nucleosome remodeling and deacetylation (NuRD) complex, and SETDB1 (which specifically methylates histone H3 at 'Lys-9' (H3K9me)) to the promoter regions of KRAB target genes. Enhances transcriptional repression by coordinating the increase in H3K9me, the decrease in histone H3 'Lys-9 and 'Lys-14' acetylation (H3K9ac and H3K14ac, respectively) and the disposition of HP1 proteins to silence gene expression. Recruitment of SETDB1 induces heterochromatinization. May play a role as a coactivator for CEBPB and NR3C1 in the transcriptional activation of ORM1. Also a corepressor for ERBB4. Inhibits E2F1 activity by stimulating E2F1-HDAC1 complex formation and inhibiting E2F1 acetylation. May serve as a partial backup to prevent E2F1-mediated apoptosis in the absence of RB1. Important regulator of CDKN1A/p21(CIP1). Has E3 SUMO-protein ligase activity toward itself via its PHD-type zinc finger. Also specifically sumoylates IRF7, thereby inhibiting its transactivation activity. Ubiquitinates p53/TP53 leading to its proteasomal degradation; the function is enhanced by MAGEC2 and MAGEA2, and possibly MAGEA3 and MAGEA6. Mediates the nuclear localization of KOX1, ZNF268 and ZNF300 transcription factors. In association with isoform 2 of ZFP90, is required for the transcriptional repressor activity of FOXP3 and the suppressive function of regulatory T-cells (Treg). Probably forms a corepressor complex required for activated KRAS-mediated promoter hypermethylation and transcriptional silencing of tumor suppressor genes (TSGs) or other tumor-related genes in colorectal cancer (CRC) cells. Required to maintain a transcriptionally repressive state of genes in undifferentiated embryonic stem cells (ESCs). In ESCs, in collaboration with SETDB1, is also required for H3K9me3 and silencing of endogenous and introduced retroviruses in a DNA-methylation independent-pathway. Associates at promoter regions of tumor suppressor genes (TSGs) leading to their gene silencing. The SETDB1-TRIM28-ZNF274 complex may play a role in recruiting ATRX to the 3'-exons of zinc-finger coding genes with atypical chromatin signatures to establish or maintain/protect H3K9me3 at these transcriptionally active regions. Its function is as follows. (Microbial infection) Plays a critical role in the shutdown of lytic gene expression during the early stage of herpes virus 8 primary infection. This inhibition is mediated through interaction with herpes virus 8 protein LANA1. The protein is Transcription intermediary factor 1-beta of Homo sapiens (Human).